The primary structure comprises 302 residues: tRNA demethylase abh1 (302 aa).

Residues Trp142 and 149-151 (YDW) each bind substrate. Residues 187–299 (KAEAAIVNFY…RVNFNVRQVR (113 aa)) form the Fe2OG dioxygenase domain. 194–196 (NFY) contacts 2-oxoglutarate. The Fe cation site is built by His205 and Asp207. Substrate is bound at residue Arg235. His261 contacts Fe cation. 290–296 (RVNFNVR) provides a ligand contact to 2-oxoglutarate.

This sequence belongs to the alkB family. Requires Fe(2+) as cofactor.

The protein resides in the cytoplasm. It is found in the nucleus. It carries out the reaction an N(1)-methyladenosine in tRNA + 2-oxoglutarate + O2 = an adenosine in tRNA + formaldehyde + succinate + CO2. The enzyme catalyses N(1)-methyladenosine(58) in tRNA + 2-oxoglutarate + O2 = adenosine(58) in tRNA + formaldehyde + succinate + CO2. In terms of biological role, dioxygenase that acts as on nucleic acids, such as DNA and tRNA. Requires molecular oxygen, alpha-ketoglutarate and iron. Mainly acts as a tRNA demethylase by removing N(1)-methyladenine from various tRNAs, with a preference for N(1)-methyladenine at position 58 (m1A58) present on a stem loop structure of tRNAs. Acts as a regulator of translation initiation and elongation. Does not appear to possess DNA repair activity; no activity towards methylated DNA or etheno adducts. Exhibits a weak and unstable DNA lyase activity; this activity is probably not biologically significant and proceeds by a mechanism different from the classical dioxygenase reaction as it does not require 2-oxoglutarate or iron. This chain is tRNA demethylase abh1 (abh1), found in Schizosaccharomyces pombe (strain 972 / ATCC 24843) (Fission yeast).